Consider the following 428-residue polypeptide: Chaperone SurA (428 aa).

The first 19 residues, 1–19, serve as a signal peptide directing secretion; the sequence is MNIWKTLLLGMLVTGSAVS. PpiC domains lie at 170–268 and 277–377; these read SVEY…KIED and VTEV…EVLD.

The protein localises to the periplasm. It carries out the reaction [protein]-peptidylproline (omega=180) = [protein]-peptidylproline (omega=0). Chaperone involved in the correct folding and assembly of outer membrane proteins. Recognizes specific patterns of aromatic residues and the orientation of their side chains, which are found more frequently in integral outer membrane proteins. May act in both early periplasmic and late outer membrane-associated steps of protein maturation. The protein is Chaperone SurA of Vibrio vulnificus (strain YJ016).